We begin with the raw amino-acid sequence, 155 residues long: Fibroblast growth factor 1 (155 aa).

A propeptide spanning residues 1–15 (MAEGEITTFTALTER) is cleaved from the precursor. Asn33 contacts heparin. The segment at 127–143 (KKNGNSKLGPRTHYGQK) is heparin-binding.

The protein belongs to the heparin-binding growth factors family.

The protein localises to the secreted. It localises to the cytoplasm. It is found in the cell cortex. The protein resides in the cytosol. Its subcellular location is the nucleus. Functionally, plays an important role in the regulation of cell survival, cell division, angiogenesis, cell differentiation and cell migration. Functions as a potent mitogen in vitro. Acts as a ligand for FGFR1 and integrins. Binds to FGFR1 in the presence of heparin leading to FGFR1 dimerization and activation via sequential autophosphorylation on tyrosine residues which act as docking sites for interacting proteins, leading to the activation of several signaling cascades. Binds to integrins. Its binding to integrins and subsequent ternary complex formation with integrins and FGFR1 are essential for FGF1 signaling. This is Fibroblast growth factor 1 (FGF1) from Gallus gallus (Chicken).